The chain runs to 464 residues: Soluble pyridine nucleotide transhydrogenase (464 aa).

Glu-35–Cys-44 contributes to the FAD binding site.

Belongs to the class-I pyridine nucleotide-disulfide oxidoreductase family. It depends on FAD as a cofactor.

It is found in the cytoplasm. It catalyses the reaction NAD(+) + NADPH = NADH + NADP(+). Its function is as follows. Conversion of NADPH, generated by peripheral catabolic pathways, to NADH, which can enter the respiratory chain for energy generation. The chain is Soluble pyridine nucleotide transhydrogenase from Hahella chejuensis (strain KCTC 2396).